Here is a 137-residue protein sequence, read N- to C-terminus: Nucleoside diphosphate kinase (137 aa).

Residues K9, F57, R85, T91, R102, and N112 each coordinate ATP. H115 (pros-phosphohistidine intermediate) is an active-site residue.

It belongs to the NDK family. In terms of assembly, homotetramer. Mg(2+) is required as a cofactor.

It is found in the cytoplasm. The catalysed reaction is a 2'-deoxyribonucleoside 5'-diphosphate + ATP = a 2'-deoxyribonucleoside 5'-triphosphate + ADP. The enzyme catalyses a ribonucleoside 5'-diphosphate + ATP = a ribonucleoside 5'-triphosphate + ADP. Major role in the synthesis of nucleoside triphosphates other than ATP. The ATP gamma phosphate is transferred to the NDP beta phosphate via a ping-pong mechanism, using a phosphorylated active-site intermediate. The sequence is that of Nucleoside diphosphate kinase from Leptospira borgpetersenii serovar Hardjo-bovis (strain L550).